A 24-amino-acid chain; its full sequence is Formate ester dehydrogenase gamma chain (24 aa).

As to quaternary structure, heterotrimer composed of an alpha, a beta and a gamma chain.

The protein is Formate ester dehydrogenase gamma chain of Amycolatopsis methanolica.